Here is a 273-residue protein sequence, read N- to C-terminus: Shikimate dehydrogenase (NADP(+)) (273 aa).

Shikimate-binding positions include 15-17 (SKS) and T62. The active-site Proton acceptor is the K66. E78 contacts NADP(+). The shikimate site is built by N87 and D103. NADP(+) is bound by residues 127 to 131 (GAGGA), 151 to 156 (NRTHDK), and M214. Y216 provides a ligand contact to shikimate. G238 contacts NADP(+).

It belongs to the shikimate dehydrogenase family. Homodimer.

It carries out the reaction shikimate + NADP(+) = 3-dehydroshikimate + NADPH + H(+). It functions in the pathway metabolic intermediate biosynthesis; chorismate biosynthesis; chorismate from D-erythrose 4-phosphate and phosphoenolpyruvate: step 4/7. Its function is as follows. Involved in the biosynthesis of the chorismate, which leads to the biosynthesis of aromatic amino acids. Catalyzes the reversible NADPH linked reduction of 3-dehydroshikimate (DHSA) to yield shikimate (SA). The protein is Shikimate dehydrogenase (NADP(+)) of Shewanella denitrificans (strain OS217 / ATCC BAA-1090 / DSM 15013).